Reading from the N-terminus, the 437-residue chain is uncharacterized protein (437 aa).

Residues 63 to 87 (PSSANVSFQNSDDNLSTSRGRSASP) show a composition bias toward polar residues. 3 disordered regions span residues 63–97 (PSSA…SNFP), 112–147 (VKKD…KKET), and 346–437 (PKNA…YSIW). Polar residues predominate over residues 399–409 (EALSPSKSNPD). The segment covering 425–437 (KKPSSSSSNYSIW) has biased composition (low complexity).

This is an uncharacterized protein from Caenorhabditis elegans.